We begin with the raw amino-acid sequence, 460 residues long: Probable lipid II flippase MurJ (460 aa).

A run of 11 helical transmembrane segments spans residues 4 to 24 (ILGA…PNLF), 50 to 70 (FASL…LLVA), 95 to 115 (IVAI…LGAL), 122 to 142 (FFAS…ALLI), 155 to 175 (LSYG…YPLV), 228 to 248 (IASF…VSYL), 257 to 277 (LPLA…IAIA), 292 to 312 (KAWF…IMLS), 336 to 356 (VFSL…FSLW), 366 to 386 (AAKI…SLMP), and 428 to 448 (LVIL…KSWV).

It belongs to the MurJ/MviN family.

Its subcellular location is the cell inner membrane. Its pathway is cell wall biogenesis; peptidoglycan biosynthesis. Its function is as follows. Involved in peptidoglycan biosynthesis. Transports lipid-linked peptidoglycan precursors from the inner to the outer leaflet of the cytoplasmic membrane. The chain is Probable lipid II flippase MurJ from Helicobacter pylori (strain J99 / ATCC 700824) (Campylobacter pylori J99).